The sequence spans 965 residues: Phosphoenolpyruvate carboxylase 1 (965 aa).

At S11 the chain carries Phosphoserine. H172 is an active-site residue. The D-glucose 6-phosphate site is built by W283, R450, and D597. K600 is a catalytic residue. Residue R635 participates in D-glucose 6-phosphate binding. Residue R641 is part of the active site. R641 is a binding site for L-aspartate. Residue T665 coordinates D-glucose 6-phosphate. Q673 is a binding site for L-aspartate. D-glucose 6-phosphate is bound by residues R753 and 767 to 769 (RAI). Residues K829, R888, and N963 each contribute to the L-aspartate site.

The protein belongs to the PEPCase type 1 family. Homotetramer. Mg(2+) is required as a cofactor. Expressed in roots and stems and at low levels in leaves. Preferentially expressed in the phloem and in root tips.

The protein resides in the cytoplasm. It carries out the reaction oxaloacetate + phosphate = phosphoenolpyruvate + hydrogencarbonate. Its activity is regulated as follows. Activated by the allosteric regulator glucose-6-phosphate. Inhibited by malate and aspartate. Up regulated by light-reversible phosphorylation. Functionally, through the carboxylation of phosphoenolpyruvate (PEP) it forms oxaloacetate, a four-carbon dicarboxylic acid source for the tricarboxylic acid cycle. May be involved in phloem loading with sucrose and in anions and cations uptake and amino acid biosynthesis in roots. The protein is Phosphoenolpyruvate carboxylase 1 of Flaveria trinervia (Clustered yellowtops).